A 524-amino-acid chain; its full sequence is uncharacterized protein (524 aa).

A helical transmembrane segment spans residues 13–33 (EFILLILGMTVVGIVITMGLV).

It localises to the membrane. This is an uncharacterized protein from Methanocaldococcus jannaschii (strain ATCC 43067 / DSM 2661 / JAL-1 / JCM 10045 / NBRC 100440) (Methanococcus jannaschii).